We begin with the raw amino-acid sequence, 144 residues long: Short-chain diamines transporter (144 aa).

The next 4 helical transmembrane spans lie at Ile-9–Ile-29, Glu-35–Phe-55, Ile-76–Tyr-96, and Ile-103–Phe-123.

The protein belongs to the proteobacterial antimicrobial compound efflux (PACE) (TC 2.A.117) family. In terms of assembly, exists in a monomer-homodimer equilibrium. The dimer is probably the functional form of the protein, and the assembly of the dimer is mediated by binding of chlorhexidine and promoted by high pH conditions.

It localises to the cell inner membrane. Protonation/deprotonation of Glu-15 may play an important role in transporter function. Cadaverin transport is inhibited in the presence of CCCP. Functionally, mediates the efflux of short-chain diamines when energized by an electrochemical gradient. Recognizes specifically the short-chain diamines cadaverine and putrescine as substrates, and promotes the active transport of these substrates in exchange for a cation. Protons are probably the primary source of energy for transport, however it was not possible to conclude with complete certainty that protons, rather than alternative cations such as Na(+) ions, are exchanged for substrates by AceI. In addition, is involved in resistance to the synthetic biocide chlorhexidine, a widely used antiseptic and disinfectant in both hospital and community settings. Interacts directly with chlorhexidine and mediates its efflux via an energy-dependent mechanism. In Acinetobacter baumannii (strain ATCC 17978 / DSM 105126 / CIP 53.77 / LMG 1025 / NCDC KC755 / 5377), this protein is Short-chain diamines transporter.